The primary structure comprises 272 residues: Catabolic 3-dehydroquinate dehydratase (272 aa).

3-dehydroquinate is bound by residues 66-68 (EFR) and Arg102. His163 functions as the Proton donor/acceptor in the catalytic mechanism. Lys190 (schiff-base intermediate with substrate) is an active-site residue. Residues Arg232, Ser251, and Gln255 each contribute to the 3-dehydroquinate site.

Belongs to the type-I 3-dehydroquinase family.

The enzyme catalyses 3-dehydroquinate = 3-dehydroshikimate + H2O. It participates in aromatic compound metabolism; 3,4-dihydroxybenzoate biosynthesis; 3,4-dihydroxybenzoate from 3-dehydroquinate: step 1/2. Functionally, involved in the biosynthesis of protocatechuate. Catalyzes the catabolic dehydration of 3-dehydroquinate (DHQ) to yield 3-dehydroshikimate. The protein is Catabolic 3-dehydroquinate dehydratase of Acinetobacter baylyi (strain ATCC 33305 / BD413 / ADP1).